A 567-amino-acid polypeptide reads, in one-letter code: 2-succinyl-5-enolpyruvyl-6-hydroxy-3-cyclohexene-1-carboxylate synthase (567 aa).

It belongs to the TPP enzyme family. MenD subfamily. As to quaternary structure, homodimer. Mg(2+) is required as a cofactor. Mn(2+) serves as cofactor. It depends on thiamine diphosphate as a cofactor.

The catalysed reaction is isochorismate + 2-oxoglutarate + H(+) = 5-enolpyruvoyl-6-hydroxy-2-succinyl-cyclohex-3-ene-1-carboxylate + CO2. The protein operates within quinol/quinone metabolism; 1,4-dihydroxy-2-naphthoate biosynthesis; 1,4-dihydroxy-2-naphthoate from chorismate: step 2/7. It functions in the pathway quinol/quinone metabolism; menaquinone biosynthesis. Catalyzes the thiamine diphosphate-dependent decarboxylation of 2-oxoglutarate and the subsequent addition of the resulting succinic semialdehyde-thiamine pyrophosphate anion to isochorismate to yield 2-succinyl-5-enolpyruvyl-6-hydroxy-3-cyclohexene-1-carboxylate (SEPHCHC). This is 2-succinyl-5-enolpyruvyl-6-hydroxy-3-cyclohexene-1-carboxylate synthase from Yersinia pseudotuberculosis serotype O:1b (strain IP 31758).